Reading from the N-terminus, the 20-residue chain is Octopamine receptor (20 aa).

Belongs to the G-protein coupled receptor 1 family.

Its subcellular location is the cell membrane. Functionally, putative receptor for octopamine. Octopamine (OA) is a neurotransmitter, neurohormone, and neuromodulator in invertebrates. The activity of this receptor is mediated by G proteins which activate adenylyl cyclase. The chain is Octopamine receptor from Photinus pyralis (Common eastern firefly).